We begin with the raw amino-acid sequence, 369 residues long: Cobalt-precorrin-5B C(1)-methyltransferase (369 aa).

The protein belongs to the CbiD family.

The enzyme catalyses Co-precorrin-5B + S-adenosyl-L-methionine = Co-precorrin-6A + S-adenosyl-L-homocysteine. Its pathway is cofactor biosynthesis; adenosylcobalamin biosynthesis; cob(II)yrinate a,c-diamide from sirohydrochlorin (anaerobic route): step 6/10. In terms of biological role, catalyzes the methylation of C-1 in cobalt-precorrin-5B to form cobalt-precorrin-6A. The polypeptide is Cobalt-precorrin-5B C(1)-methyltransferase (Prosthecochloris aestuarii (strain DSM 271 / SK 413)).